The sequence spans 589 residues: MKDELALTIANTIINGFERHFAIFTEITQSARNRFQQCQWNEIHRSARARTNFYDERVKETFNDIKEDFNISSLDDALWQRVKAVYSDLLINHKQPELAETFYNSVFCHLFERKYYHNDYIYVESTAHRLDDKTQPEIYTSYQPKELGLKQTICDIMNSHRTVIPFEDLDRDVDALINTFRRKAHKTRVKLEDLKFDILNFTFYRNKGAYLIGRVLSPAGETPFIIAVLNNEKGGLYIDALLTSSESMAVVFGFARAYFFVDCEHPYALVNFLQGLMPHKTKADLYSAIGFHKQGKTQFYRDFLNHLDSSDDQFELAAGIKGMVMSVFTLPSYPYVFKIIKDKFSPSKNITKKDVKGKYRLVKLHDRVGRMADTMEYSEVAFPKSRFNDELLAELQKVAPSIIRYEGEGEEALIIIEHLYIERRMVPLNLYLMDALKNKAQQKIDDALFGYGQAIKQLISADIFPGDMLLKNFGVTRHGRVIFYDYDEIAYMNEINFRVKPKAVTEEQLYAAEPWYSVMPGDMFPEELATFALANPSYLKAFKIHHEDLLTAAYWQQCQQDVANGIYKDVFPYPDKYRFCNLSFGSIKR.

Residues 317-323 (AAGIKGM) and lysine 338 contribute to the ATP site. Aspartate 373 is a catalytic residue.

Belongs to the AceK family.

The protein resides in the cytoplasm. It carries out the reaction L-seryl-[isocitrate dehydrogenase] + ATP = O-phospho-L-seryl-[isocitrate dehydrogenase] + ADP + H(+). Bifunctional enzyme which can phosphorylate or dephosphorylate isocitrate dehydrogenase (IDH) on a specific serine residue. This is a regulatory mechanism which enables bacteria to bypass the Krebs cycle via the glyoxylate shunt in response to the source of carbon. When bacteria are grown on glucose, IDH is fully active and unphosphorylated, but when grown on acetate or ethanol, the activity of IDH declines drastically concomitant with its phosphorylation. This is Isocitrate dehydrogenase kinase/phosphatase from Colwellia psychrerythraea (strain 34H / ATCC BAA-681) (Vibrio psychroerythus).